Reading from the N-terminus, the 436-residue chain is DNA primase DnaG (436 aa).

The 75-residue stretch at 169 to 243 (DSIIVVEGRA…DIDYVARAPY (75 aa)) folds into the Toprim domain. E175, D217, and D219 together coordinate Mg(2+).

It belongs to the archaeal DnaG primase family. In terms of assembly, forms a ternary complex with MCM helicase and DNA. It depends on Mg(2+) as a cofactor.

The enzyme catalyses ssDNA + n NTP = ssDNA/pppN(pN)n-1 hybrid + (n-1) diphosphate.. Its function is as follows. RNA polymerase that catalyzes the synthesis of short RNA molecules used as primers for DNA polymerase during DNA replication. The sequence is that of DNA primase DnaG from Methanococcus maripaludis (strain DSM 14266 / JCM 13030 / NBRC 101832 / S2 / LL).